The following is a 189-amino-acid chain: Batroxicidin (189 aa).

The N-terminal stretch at 1 to 22 (MQGFFWKTWLVVALCGTSSSLA) is a signal peptide. A propeptide spanning residues 23–155 (HRPLSYGEAL…DEEKDRPKRV (133 aa)) is cleaved from the precursor. 2 disulfides stabilise this stretch: Cys-79/Cys-90 and Cys-101/Cys-118. The segment covering 125–148 (EEEEEDEEEQKAEVEKDEEKEDEE) has biased composition (acidic residues). Residues 125–152 (EEEEEDEEEQKAEVEKDEEKEDEEKDRP) are disordered.

The protein belongs to the cathelicidin family. Expressed by the venom gland.

It is found in the secreted. Its subcellular location is the target cell membrane. Potent antimicrobial peptide against Gram-negative (MIC=0.25 ug/ml against E.coli ATCC 25922, MIC=1 ug/ml against P.aeruginosa) and Gram-positive bacteria (MIC=32 ug/ml against E.faecalis, MIC=32 ug/ml against S.aureus). Adopts an amphipathic alpha helical conformation, that may allow to partition into the target membrane. Low hemolytic activities have been observed on mammalian cells. In addition, when tested in vitro on the parasite Trypanosoma cruzi (responsible of the Chagas disease), is able to reduce the number of the three forms (epimastigote, trypomastigote and amastigote) by inducing cell death through necrosis. This chain is Batroxicidin, found in Bothrops atrox (Barba amarilla).